The sequence spans 68 residues: Large ribosomal subunit protein uL29c (68 aa).

The protein belongs to the universal ribosomal protein uL29 family.

It localises to the plastid. Its subcellular location is the chloroplast. The polypeptide is Large ribosomal subunit protein uL29c (Pyropia yezoensis (Susabi-nori)).